Consider the following 398-residue polypeptide: Fructose-bisphosphate aldolase 2, chloroplastic (398 aa).

Residues Met1–Arg46 constitute a chloroplast transit peptide. Arg95 contacts substrate. The residue at position 157 (Ser157) is a Phosphoserine. Residue Lys185 participates in substrate binding. Ser215 carries the post-translational modification Phosphoserine. Glu225 acts as the Proton acceptor in catalysis. Lys267 functions as the Schiff-base intermediate with dihydroxyacetone-P in the catalytic mechanism. Substrate is bound at residue Ser309–Gly311. Lys394 is subject to N6,N6,N6-trimethyllysine.

This sequence belongs to the class I fructose-bisphosphate aldolase family. Homotetramer. Post-translationally, can be trimethylated at Lys-394 by LSMT-L. The methylation level has no influence on the ologomerization state or on the kinetic properties of the enzyme. In terms of processing, phosphorylated on tyrosine residues in response to abscisic acid (ABA) in germinating seeds. Highly expressed in rosettes leaves.

The protein localises to the plastid. It localises to the chloroplast. Its subcellular location is the plastoglobule. It is found in the chloroplast stroma. It catalyses the reaction beta-D-fructose 1,6-bisphosphate = D-glyceraldehyde 3-phosphate + dihydroxyacetone phosphate. It participates in carbohydrate degradation; glycolysis; D-glyceraldehyde 3-phosphate and glycerone phosphate from D-glucose: step 4/4. In terms of biological role, plays a key role in glycolysis and gluconeogenesis. In Arabidopsis thaliana (Mouse-ear cress), this protein is Fructose-bisphosphate aldolase 2, chloroplastic.